The primary structure comprises 239 residues: Ribosomal RNA small subunit methyltransferase G (239 aa).

Residues G80, F85, 103–105 (EAS), 131–132 (AE), and R150 contribute to the S-adenosyl-L-methionine site.

It belongs to the methyltransferase superfamily. RNA methyltransferase RsmG family.

Its subcellular location is the cytoplasm. Its function is as follows. Specifically methylates the N7 position of a guanine in 16S rRNA. The chain is Ribosomal RNA small subunit methyltransferase G from Caldanaerobacter subterraneus subsp. tengcongensis (strain DSM 15242 / JCM 11007 / NBRC 100824 / MB4) (Thermoanaerobacter tengcongensis).